An 881-amino-acid chain; its full sequence is Alanine--tRNA ligase (881 aa).

Zn(2+) contacts are provided by H568, H572, C670, and H674.

This sequence belongs to the class-II aminoacyl-tRNA synthetase family. The cofactor is Zn(2+).

The protein localises to the cytoplasm. The catalysed reaction is tRNA(Ala) + L-alanine + ATP = L-alanyl-tRNA(Ala) + AMP + diphosphate. In terms of biological role, catalyzes the attachment of alanine to tRNA(Ala) in a two-step reaction: alanine is first activated by ATP to form Ala-AMP and then transferred to the acceptor end of tRNA(Ala). Also edits incorrectly charged Ser-tRNA(Ala) and Gly-tRNA(Ala) via its editing domain. The sequence is that of Alanine--tRNA ligase from Moorella thermoacetica (strain ATCC 39073 / JCM 9320).